Here is a 134-residue protein sequence, read N- to C-terminus: Mini-ribonuclease 3 (134 aa).

Aspartate 23 is an active-site residue.

It belongs to the MrnC RNase family. Homodimer. Mg(2+) serves as cofactor.

It is found in the cytoplasm. Its function is as follows. Involved in correct processing of both the 5' and 3' ends of 23S rRNA precursor. Processes 30S rRNA precursor transcript even in absence of ribonuclease 3 (Rnc); Rnc processes 30S rRNA into smaller rRNA precursors. The protein is Mini-ribonuclease 3 of Brevibacillus brevis (strain 47 / JCM 6285 / NBRC 100599).